Here is a 156-residue protein sequence, read N- to C-terminus: Transcription factor MafK (156 aa).

Residues 1 to 21 (MTTNPKPNKALKVKEESGENA) are disordered. The interval 51 to 76 (RLKQRRRTLKNRGYAASCRIKRVTQK) is basic motif. In terms of domain architecture, bZIP spans 51 to 114 (RLKQRRRTLK…DALRSKYEAL (64 aa)). The tract at residues 79-93 (LERQRVELQQEVEKL) is leucine-zipper.

The protein belongs to the bZIP family. Maf subfamily. Homodimer or heterodimer.

The protein resides in the nucleus. In terms of biological role, since they lack a putative transactivation domain, the small Mafs behave as transcriptional repressors when they dimerize among themselves. However, they act as transcriptional activators by dimerizing with other (usually larger) basic-zipper proteins and recruiting them to specific DNA-binding sites. Small Maf proteins heterodimerize with Fos and may act as competitive repressors of the NF-E2 transcription factor. The chain is Transcription factor MafK (MAFK) from Gallus gallus (Chicken).